Here is a 101-residue protein sequence, read N- to C-terminus: MAKTSMKAREAKRAQLVAKYAEKRAALKTIIASPASSDEDRWDAVLKLQALPRDSSAARQRNRCNQTGRPHGFLRKFGLSRIKLREATMRGEVPGLRKASW.

This sequence belongs to the universal ribosomal protein uS14 family. In terms of assembly, part of the 30S ribosomal subunit. Contacts proteins S3 and S10.

Functionally, binds 16S rRNA, required for the assembly of 30S particles and may also be responsible for determining the conformation of the 16S rRNA at the A site. The polypeptide is Small ribosomal subunit protein uS14 (Shewanella baltica (strain OS155 / ATCC BAA-1091)).